Consider the following 364-residue polypeptide: Protein L-Myc (364 aa).

Disordered regions lie at residues 41 to 81 (TSPP…HSKG), 111 to 172 (DRLA…EIDV), and 219 to 285 (PPES…KRKN). The span at 228 to 245 (ASERGPQEEVLERDAAGE) shows a compositional bias: basic and acidic residues. The region spanning 281-333 (TKRKNHNFLERKRRNDLRSRFLALRDQVPTLASCSKAPKVVILSKALEYLQAL) is the bHLH domain. The segment at 333 to 361 (LVGAEKRMATEKRQLRCRQQQLQKRIAYL) is leucine-zipper.

In terms of assembly, efficient DNA binding requires dimerization with another bHLH protein. Binds DNA as a heterodimer with MAX.

It localises to the nucleus. In Homo sapiens (Human), this protein is Protein L-Myc (MYCL).